Consider the following 396-residue polypeptide: Period circadian protein (396 aa).

Disordered stretches follow at residues 27–120 (VTAP…APPV), 164–188 (LEYSGPGPGHGHGIKRGGSHSWEGE), 253–273 (GGNGNVGSGNGNNNQPSTNQY), and 333–362 (SPSSTNTNPNRPHKHAHVHNSSEKPSTSQA). Residues 93-114 (GTSGTGNSGDGGGGGGANGTGS) are compositionally biased toward gly residues. The segment covering 253–262 (GGNGNVGSGN) has biased composition (gly residues). The span at 333 to 342 (SPSSTNTNPN) shows a compositional bias: low complexity.

In terms of assembly, forms a heterodimer with timeless (TIM); the complex then translocates into the nucleus. In terms of processing, phosphorylated with a circadian rhythmicity, probably by the double-time protein (dbt). Phosphorylation could be implicated in the stability of per monomer and in the formation of heterodimer per-tim.

Its subcellular location is the nucleus. The protein localises to the cytoplasm. It is found in the perinuclear region. In terms of biological role, essential for biological clock functions. Determines the period length of circadian and ultradian rhythms; an increase in PER dosage leads to shortened circadian rhythms and a decrease leads to lengthened circadian rhythms. Essential for the circadian rhythmicity of locomotor activity, eclosion behavior, and for the rhythmic component of the male courtship song that originates in the thoracic nervous system. The biological cycle depends on the rhythmic formation and nuclear localization of the TIM-PER complex. Light induces the degradation of TIM, which promotes elimination of PER. Nuclear activity of the heterodimer coordinatively regulates PER and TIM transcription through a negative feedback loop. Behaves as a negative element in circadian transcriptional loop. Does not appear to bind DNA, suggesting indirect transcriptional inhibition. The polypeptide is Period circadian protein (per) (Drosophila pavlovskiana (Fruit fly)).